The chain runs to 152 residues: Ribosome maturation factor RimP (152 aa).

Belongs to the RimP family.

The protein localises to the cytoplasm. Functionally, required for maturation of 30S ribosomal subunits. This chain is Ribosome maturation factor RimP, found in Burkholderia ambifaria (strain MC40-6).